The primary structure comprises 457 residues: Multidrug resistance protein MdtK (457 aa).

Transmembrane regions (helical) follow at residues Leu11–Val31, Ile53–Ala73, Trp93–Ile113, Ala127–Ala147, Gly160–Tyr180, Gly189–Val209, Leu243–Val263, Ile276–Thr296, Ala314–Val334, Val350–Ile370, Ile387–Ala407, and Pro418–Leu438.

It belongs to the multi antimicrobial extrusion (MATE) (TC 2.A.66.1) family. MdtK subfamily.

Its subcellular location is the cell inner membrane. Its function is as follows. Multidrug efflux pump that functions probably as a Na(+)/drug antiporter. The sequence is that of Multidrug resistance protein MdtK from Escherichia coli O45:K1 (strain S88 / ExPEC).